The chain runs to 564 residues: Serine/threonine-protein kinase PknA (564 aa).

The region spanning 9-271 is the Protein kinase domain; the sequence is YRVIKTLGSG…TAREMLEALQ (263 aa). ATP-binding positions include 15–23 and Lys40; that span reads LGSGGFGET. Asp139 functions as the Proton acceptor in the catalytic mechanism. Polar residues predominate over residues 360-406; the sequence is QPVTQTTSLPSETTISNNDTPTVEPSPTDTPETPISQTVTQDPTPQA. Residues 360 to 458 are disordered; it reads QPVTQTTSLP…PVEATDRPSP (99 aa). Residues 428 to 445 are compositionally biased toward low complexity; the sequence is TTEPTTSVPQPTTPSEPQ.

Belongs to the protein kinase superfamily. Ser/Thr protein kinase family.

The enzyme catalyses L-seryl-[protein] + ATP = O-phospho-L-seryl-[protein] + ADP + H(+). It catalyses the reaction L-threonyl-[protein] + ATP = O-phospho-L-threonyl-[protein] + ADP + H(+). Functionally, probably required for both normal cellular growth and differentiation. Inactivation of pknA leads to colonies that appear light green and rough in the absence of combined nitrogen. This Nostoc sp. (strain PCC 7120 / SAG 25.82 / UTEX 2576) protein is Serine/threonine-protein kinase PknA (pknA).